The chain runs to 730 residues: Tubulin polyglutamylase ttll-5 (730 aa).

The TTL domain occupies 120-478 (RLRLTFKMMR…PLLDRKIIDS (359 aa)). ATP contacts are provided by residues 278 to 281 (SRYL), Lys-291, and Asp-293. Positions 594 to 618 (KKNTKNSSGSSKASSSSASASSSSS) are disordered. The segment covering 600-618 (SSGSSKASSSSASASSSSS) has biased composition (low complexity).

It belongs to the tubulin--tyrosine ligase family. Expressed in body wall muscles. Not expressed in sensory neurons.

It catalyses the reaction L-glutamyl-[protein] + L-glutamate + ATP = gamma-L-glutamyl-L-glutamyl-[protein] + ADP + phosphate + H(+). In terms of biological role, polyglutamylase which preferentially modifies alpha-tubulin. Involved in the side-chain initiation step of the polyglutamylation reaction rather than in the elongation step. Together with ttll-4 and ttll-11, required for male mating. Probably by regulating microtubule stability via the glutamylation of tubulin, negatively regulates axon regrowth after injury in PLM neurons. This chain is Tubulin polyglutamylase ttll-5, found in Caenorhabditis elegans.